A 755-amino-acid polypeptide reads, in one-letter code: Protein MTSS 1 (755 aa).

One can recognise an IMD domain in the interval methionine 1–serine 250. Residues leucine 108 to arginine 155 are a coiled coil. Disordered stretches follow at residues lysine 139 to glutamine 159 and serine 255 to asparagine 305. At threonine 258 the chain carries Phosphothreonine. Serine 261, serine 262, serine 271, and serine 322 each carry phosphoserine. Residues glutamine 327 to serine 351 are disordered. Threonine 425 bears the Phosphothreonine mark. 3 disordered regions span residues arginine 428–glycine 470, aspartate 490–cysteine 513, and glutamine 563–serine 755. The span at threonine 443–glutamate 453 shows a compositional bias: low complexity. Position 603 is a phosphothreonine (threonine 603). Residues proline 608–valine 623 are compositionally biased toward low complexity. Phosphoserine is present on residues serine 644 and serine 647. Residues glycine 656–valine 671 show a composition bias toward polar residues. Residues glutamine 727 to threonine 744 enclose the WH2 domain.

The protein belongs to the MTSS family. Binds to actin. Binds to the cytoplasmic domain of receptor protein tyrosine phosphatase delta. As to expression, expressed in many tissues, including spleen, thymus, prostate, testis, uterus, colon, and peripheral blood.

The protein resides in the cytoplasm. It localises to the cytoskeleton. Its function is as follows. May be related to cancer progression or tumor metastasis in a variety of organ sites, most likely through an interaction with the actin cytoskeleton. The protein is Protein MTSS 1 of Homo sapiens (Human).